Consider the following 236-residue polypeptide: Orotidine 5'-phosphate decarboxylase (236 aa).

Substrate-binding positions include aspartate 16, lysine 38, 65-74 (DLKYHDIPNT), threonine 124, arginine 185, glutamine 194, glycine 214, and arginine 215. Catalysis depends on lysine 67, which acts as the Proton donor.

This sequence belongs to the OMP decarboxylase family. Type 1 subfamily. As to quaternary structure, homodimer.

It catalyses the reaction orotidine 5'-phosphate + H(+) = UMP + CO2. The protein operates within pyrimidine metabolism; UMP biosynthesis via de novo pathway; UMP from orotate: step 2/2. In terms of biological role, catalyzes the decarboxylation of orotidine 5'-monophosphate (OMP) to uridine 5'-monophosphate (UMP). This Hydrogenovibrio crunogenus (strain DSM 25203 / XCL-2) (Thiomicrospira crunogena) protein is Orotidine 5'-phosphate decarboxylase.